The sequence spans 261 residues: Carbonic anhydrase 1 (261 aa).

Position 2 is an N-acetylalanine (Ala2). One can recognise an Alpha-carbonic anhydrase domain in the interval 4-261 (PDWGYDDKNG…LKGRTVRASF (258 aa)). The Proton donor/acceptor role is filled by His65. Zn(2+)-binding residues include His95, His97, and His120. Substrate-binding positions include Thr200 and 200 to 201 (TH). Residues 238-261 (NPVPIQRNNRPTQPLKGRTVRASF) form a disordered region.

The protein belongs to the alpha-carbonic anhydrase family. Requires Zn(2+) as cofactor.

It localises to the cytoplasm. The catalysed reaction is hydrogencarbonate + H(+) = CO2 + H2O. It catalyses the reaction urea = cyanamide + H2O. Inhibited by acetazolamide. Catalyzes the reversible hydration of carbon dioxide. Can hydrate cyanamide to urea. This is Carbonic anhydrase 1 (CA1) from Macaca mulatta (Rhesus macaque).